The primary structure comprises 648 residues: Translation factor GUF1 homolog, mitochondrial (648 aa).

The 193-residue stretch at 55-247 (ERVRNFSIIA…AVIERIPSPP (193 aa)) folds into the tr-type G domain. GTP contacts are provided by residues 64 to 71 (AHVDHGKS), 140 to 144 (DTPGH), and 194 to 197 (NKID).

This sequence belongs to the TRAFAC class translation factor GTPase superfamily. Classic translation factor GTPase family. LepA subfamily.

The protein resides in the mitochondrion inner membrane. The enzyme catalyses GTP + H2O = GDP + phosphate + H(+). Its function is as follows. Promotes mitochondrial protein synthesis. May act as a fidelity factor of the translation reaction, by catalyzing a one-codon backward translocation of tRNAs on improperly translocated ribosomes. Binds to mitochondrial ribosomes in a GTP-dependent manner. The polypeptide is Translation factor GUF1 homolog, mitochondrial (Oryza sativa subsp. indica (Rice)).